Reading from the N-terminus, the 725-residue chain is MTLSDSDLELITTELGRELTPAEAALFENLWSEHCAYRSSRPLLQSFTTGDDSANDEGAEHVVIGPGDDAAVVRLPRVDEASETPIYITMGIESHNHPSYVDPYDGAATGVGGIVRDTLSMGAYPIALADSLYFGSFDRERTQYLLDGVVEGIADYGNAIGVPTVAGSVEFHNKYTGNPLVNVACIGLLTDERLVTAEAQSPGNKLVLVGNATGRDGLGGASFASEDLSEDAETEDRPAVQVGDPYTEKRLIEANEELITAELIQSARDLGAAGLGGASSELVAKGGLGARINLERVHQREPAMNAMEILLAESQERMCYEVHPDDVETVGDIAAKYDLGYAVIGEIRDGNYVCTFGDETVVDVPAGFLADGAPMNDLSATEPPTPEESTFPAIDAATAFNTIISTPNTASKRWIYRQYDHEVGLRTAMRPGDDAALIAIREAGVGLALSSGAVPAWTESNPYKGAQAVALENATNVAAKGATPIAAVDCLNGGNPEKPAVYGAFKDIVQGLADMCHTLSIPVVGGNVSLYNDSTSGPIPPTPTLALVGTKKTFDAPPAALTGDGTLLLVGHQSNNLGGSELLAQIGGTDKFPALPSNPTAVVDSLARVANHPSTLATHDVSTGGLAVTLAELITSDAGARVTVQNKTSLFTETPGRAVIETTDPDAVRHIFEGVAPVVSLGDTTTDGTLTINIDDEDTANESPAVTTDAATVAKQRRILEDALE.

Histidine 34 is a catalytic residue. Tyrosine 37 provides a ligand contact to ATP. Glutamate 93 is a binding site for Mg(2+). Substrate-binding positions include 94 to 97 and arginine 116; that span reads SHNH. Histidine 95 serves as the catalytic Proton acceptor. Residue aspartate 117 coordinates Mg(2+). Residues 220–241 are disordered; it reads GASFASEDLSEDAETEDRPAVQ. Glutamine 241 provides a ligand contact to substrate. Aspartate 269 is a binding site for Mg(2+). 313 to 315 lines the substrate pocket; the sequence is ESQ. ATP contacts are provided by aspartate 489 and glycine 526. Residue asparagine 527 participates in Mg(2+) binding. Residue serine 529 participates in substrate binding.

Belongs to the FGAMS family. In terms of assembly, monomer. Part of the FGAM synthase complex composed of 1 PurL, 1 PurQ and 2 PurS subunits.

The protein localises to the cytoplasm. The enzyme catalyses N(2)-formyl-N(1)-(5-phospho-beta-D-ribosyl)glycinamide + L-glutamine + ATP + H2O = 2-formamido-N(1)-(5-O-phospho-beta-D-ribosyl)acetamidine + L-glutamate + ADP + phosphate + H(+). It functions in the pathway purine metabolism; IMP biosynthesis via de novo pathway; 5-amino-1-(5-phospho-D-ribosyl)imidazole from N(2)-formyl-N(1)-(5-phospho-D-ribosyl)glycinamide: step 1/2. In terms of biological role, part of the phosphoribosylformylglycinamidine synthase complex involved in the purines biosynthetic pathway. Catalyzes the ATP-dependent conversion of formylglycinamide ribonucleotide (FGAR) and glutamine to yield formylglycinamidine ribonucleotide (FGAM) and glutamate. The FGAM synthase complex is composed of three subunits. PurQ produces an ammonia molecule by converting glutamine to glutamate. PurL transfers the ammonia molecule to FGAR to form FGAM in an ATP-dependent manner. PurS interacts with PurQ and PurL and is thought to assist in the transfer of the ammonia molecule from PurQ to PurL. This is Phosphoribosylformylglycinamidine synthase subunit PurL from Haloquadratum walsbyi (strain DSM 16790 / HBSQ001).